We begin with the raw amino-acid sequence, 218 residues long: Small ribosomal subunit protein uS3c (218 aa).

Positions 47 to 118 constitute a KH type-2 domain; the sequence is VQKEMRISSG…RLNVVITRVA (72 aa).

This sequence belongs to the universal ribosomal protein uS3 family. As to quaternary structure, part of the 30S ribosomal subunit.

Its subcellular location is the plastid. The protein resides in the chloroplast. The polypeptide is Small ribosomal subunit protein uS3c (rps3) (Ceratophyllum demersum (Rigid hornwort)).